Consider the following 231-residue polypeptide: Isoprenyl transferase (231 aa).

The active site involves aspartate 14. Aspartate 14 contacts Mg(2+). Substrate contacts are provided by residues 15–18 (GNGR), tryptophan 19, arginine 27, histidine 31, and 59–61 (STE). Catalysis depends on asparagine 62, which acts as the Proton acceptor. Substrate-binding positions include tryptophan 63, arginine 65, arginine 176, and 182–184 (RIS). Glutamate 195 is a binding site for Mg(2+).

It belongs to the UPP synthase family. In terms of assembly, homodimer. The cofactor is Mg(2+).

Catalyzes the condensation of isopentenyl diphosphate (IPP) with allylic pyrophosphates generating different type of terpenoids. This is Isoprenyl transferase from Aquifex aeolicus (strain VF5).